The primary structure comprises 181 residues: Protein Syd (181 aa).

It belongs to the Syd family.

It is found in the cell inner membrane. Interacts with the SecY protein in vivo. May bind preferentially to an uncomplexed state of SecY, thus functioning either as a chelating agent for excess SecY in the cell or as a regulatory factor that negatively controls the translocase function. The chain is Protein Syd from Shigella flexneri.